The following is a 202-amino-acid chain: METYIQESDISNEDDLKAFCDMYLRQNLASTDAIIAQEAYRLAKENDLQGLIRLENICHAIKLSPETRKGSMMMGRQFLQTVQPLNNSELFTIWCEKLKNKEIKSHYPVVYGIYTAMLGVDLRTSLETFLYSSITSLVQNGVRAIPLGQNSGVQTIFSLLPVIQETTSRVMTLDLEHLDNNSIGLEIASMKHEFLHSRLFIS.

Belongs to the UreF family. UreD, UreF and UreG form a complex that acts as a GTP-hydrolysis-dependent molecular chaperone, activating the urease apoprotein by helping to assemble the nickel containing metallocenter of UreC. The UreE protein probably delivers the nickel.

The protein resides in the cytoplasm. Its function is as follows. Required for maturation of urease via the functional incorporation of the urease nickel metallocenter. This is Urease accessory protein UreF from Sporosarcina pasteurii (Bacillus pasteurii).